A 222-amino-acid chain; its full sequence is Small ribosomal subunit protein uS3 (222 aa).

Residues 39–109 (IRNFVKKKVY…NILINIVEVK (71 aa)) enclose the KH type-2 domain.

It belongs to the universal ribosomal protein uS3 family. As to quaternary structure, part of the 30S ribosomal subunit. Forms a tight complex with proteins S10 and S14.

Binds the lower part of the 30S subunit head. Binds mRNA in the 70S ribosome, positioning it for translation. This is Small ribosomal subunit protein uS3 from Clostridium tetani (strain Massachusetts / E88).